The following is a 596-amino-acid chain: Protein FlbA (596 aa).

4 TPR repeats span residues 91–124 (GLAW…LPDH), 159–192 (VEGA…NPEA), 193–226 (AVLW…APDF), and 228–260 (KAYH…PGSP).

The polypeptide is Protein FlbA (flbA) (Caulobacter vibrioides (strain ATCC 19089 / CIP 103742 / CB 15) (Caulobacter crescentus)).